Here is a 709-residue protein sequence, read N- to C-terminus: Catalase HPII (709 aa).

A compositionally biased stretch (polar residues) spans 1 to 26; it reads MSEQNNEQRSQAAGTDTVDRGNSNAK. The interval 1–32 is disordered; that stretch reads MSEQNNEQRSQAAGTDTVDRGNSNAKLEQLEA. Catalysis depends on residues H90 and N163. Residue Y377 coordinates heme. The interval 419–443 is disordered; it reads RASYEPNSIDGGWPKETPPAARNGG.

The protein belongs to the catalase family. HPII subfamily. Heme is required as a cofactor.

It localises to the cytoplasm. The enzyme catalyses 2 H2O2 = O2 + 2 H2O. In terms of biological role, decomposes hydrogen peroxide into water and oxygen; serves to protect cells from the toxic effects of hydrogen peroxide. The protein is Catalase HPII (katE) of Pseudomonas aeruginosa (strain ATCC 15692 / DSM 22644 / CIP 104116 / JCM 14847 / LMG 12228 / 1C / PRS 101 / PAO1).